Consider the following 657-residue polypeptide: Bifunctional lysine-specific demethylase and histidyl-hydroxylase NO66 (657 aa).

Disordered regions lie at residues 1–141 and 165–198; these read MQKA…QTSP and KSCP…NSNE. Polar residues predominate over residues 32–41; that stretch reads SAKTVDTVTD. Basic and acidic residues predominate over residues 55 to 71; it reads AEKERRKYLQARVRAEG. Composition is skewed to polar residues over residues 73–84 and 132–141; these read SASTSSKSNATR and RSQGLEQTSP. Ser133 carries the phosphoserine modification. Phosphothreonine is present on Thr139. Ser140 bears the Phosphoserine mark. A JmjC domain is found at 315–454; the sequence is NPSTYLLGLR…NLLETLMPIV (140 aa). Fe cation-binding residues include His355, Asp357, and His420.

Belongs to the ROX family. NO66 subfamily. It depends on Fe(2+) as a cofactor.

The protein localises to the nucleus. The catalysed reaction is N(6),N(6)-dimethyl-L-lysyl(36)-[histone H3] + 2 2-oxoglutarate + 2 O2 = L-lysyl(36)-[histone H3] + 2 formaldehyde + 2 succinate + 2 CO2. Functionally, oxygenase that can act as both a histone lysine demethylase and a ribosomal histidine hydroxylase. Specifically demethylates 'Lys-4' (H3K4me) and 'Lys-36' (H3K36me) of histone H3, thereby playing a central role in histone code. This Drosophila erecta (Fruit fly) protein is Bifunctional lysine-specific demethylase and histidyl-hydroxylase NO66.